The primary structure comprises 348 residues: Protein RecA (348 aa).

66-73 is an ATP binding site; that stretch reads GPESSGKT.

It belongs to the RecA family.

The protein localises to the cytoplasm. Functionally, can catalyze the hydrolysis of ATP in the presence of single-stranded DNA, the ATP-dependent uptake of single-stranded DNA by duplex DNA, and the ATP-dependent hybridization of homologous single-stranded DNAs. It interacts with LexA causing its activation and leading to its autocatalytic cleavage. In Burkholderia lata (strain ATCC 17760 / DSM 23089 / LMG 22485 / NCIMB 9086 / R18194 / 383), this protein is Protein RecA.